The chain runs to 367 residues: Small ribosomal subunit protein uS2 (367 aa).

Positions 1–68 (MPKKAEAKTG…NSTPSTGSKF (68 aa)) are disordered. Basic and acidic residues predominate over residues 21–40 (AKKDVKAEVNETNKTAEKVS). The span at 53–66 (TNESSSNSTPSTGS) shows a compositional bias: low complexity.

The protein belongs to the universal ribosomal protein uS2 family.

In Malacoplasma penetrans (strain HF-2) (Mycoplasma penetrans), this protein is Small ribosomal subunit protein uS2.